Reading from the N-terminus, the 420-residue chain is UDP-N-acetylmuramoylalanine--D-glutamate ligase (420 aa).

109-115 (GSVGKST) contacts ATP.

Belongs to the MurCDEF family.

The protein resides in the cytoplasm. The enzyme catalyses UDP-N-acetyl-alpha-D-muramoyl-L-alanine + D-glutamate + ATP = UDP-N-acetyl-alpha-D-muramoyl-L-alanyl-D-glutamate + ADP + phosphate + H(+). It functions in the pathway cell wall biogenesis; peptidoglycan biosynthesis. Functionally, cell wall formation. Catalyzes the addition of glutamate to the nucleotide precursor UDP-N-acetylmuramoyl-L-alanine (UMA). This chain is UDP-N-acetylmuramoylalanine--D-glutamate ligase, found in Fervidobacterium nodosum (strain ATCC 35602 / DSM 5306 / Rt17-B1).